The chain runs to 173 residues: Translationally-controlled tumor protein homolog (173 aa).

The region spanning 1 to 173 (MIIFKDMITG…FKHGLEEEKV (173 aa)) is the TCTP domain.

The protein belongs to the TCTP family. Expressed by the venom gland.

It is found in the secreted. Functionally, venom protein that causes edema, enhances vascular permeability and is likely related to the inflammatory activity of the venom. In Grammostola rosea (Chilean rose tarantula), this protein is Translationally-controlled tumor protein homolog.